Reading from the N-terminus, the 176-residue chain is 3-hydroxydecanoyl-[acyl-carrier-protein] dehydratase (176 aa).

The active site involves H71.

The protein belongs to the thioester dehydratase family. FabA subfamily. Homodimer.

The protein resides in the cytoplasm. The enzyme catalyses a (3R)-hydroxyacyl-[ACP] = a (2E)-enoyl-[ACP] + H2O. It catalyses the reaction (3R)-hydroxydecanoyl-[ACP] = (2E)-decenoyl-[ACP] + H2O. It carries out the reaction (2E)-decenoyl-[ACP] = (3Z)-decenoyl-[ACP]. Its pathway is lipid metabolism; fatty acid biosynthesis. Functionally, necessary for the introduction of cis unsaturation into fatty acids. Catalyzes the dehydration of (3R)-3-hydroxydecanoyl-ACP to E-(2)-decenoyl-ACP and then its isomerization to Z-(3)-decenoyl-ACP. Can catalyze the dehydratase reaction for beta-hydroxyacyl-ACPs with saturated chain lengths up to 16:0, being most active on intermediate chain length. The polypeptide is 3-hydroxydecanoyl-[acyl-carrier-protein] dehydratase (Rhodopseudomonas palustris (strain BisB18)).